The chain runs to 103 residues: Large ribosomal subunit protein bL21 (103 aa).

Belongs to the bacterial ribosomal protein bL21 family. As to quaternary structure, part of the 50S ribosomal subunit. Contacts protein L20.

This protein binds to 23S rRNA in the presence of protein L20. The protein is Large ribosomal subunit protein bL21 of Lactobacillus helveticus (strain DPC 4571).